The chain runs to 1485 residues: Chromosome partition protein MukB (1485 aa).

Residue 34 to 41 (GGNGAGKS) participates in ATP binding. 6 coiled-coil regions span residues 337–480 (LNLV…QAYQ), 509–605 (QHLA…PVWL), 780–805 (RAAR…ATLS), 835–915 (EAEI…IQQH), 977–1116 (GMLT…AKAG), and 1210–1235 (EAIE…KLAI). Residues 666–783 (PSGAEDARLI…EVPLFGRAAR (118 aa)) are flexible hinge.

The protein belongs to the SMC family. MukB subfamily. In terms of assembly, homodimerization via its hinge domain. Binds to DNA via its C-terminal region. Interacts, and probably forms a ternary complex, with MukE and MukF via its C-terminal region. The complex formation is stimulated by calcium or magnesium. Interacts with tubulin-related protein FtsZ.

The protein resides in the cytoplasm. It localises to the nucleoid. Its function is as follows. Plays a central role in chromosome condensation, segregation and cell cycle progression. Functions as a homodimer, which is essential for chromosome partition. Involved in negative DNA supercoiling in vivo, and by this means organize and compact chromosomes. May achieve or facilitate chromosome segregation by condensation DNA from both sides of a centrally located replisome during cell division. The sequence is that of Chromosome partition protein MukB from Yersinia pseudotuberculosis serotype O:1b (strain IP 31758).